We begin with the raw amino-acid sequence, 203 residues long: Imidazoleglycerol-phosphate dehydratase (203 aa).

Belongs to the imidazoleglycerol-phosphate dehydratase family.

It localises to the cytoplasm. It catalyses the reaction D-erythro-1-(imidazol-4-yl)glycerol 3-phosphate = 3-(imidazol-4-yl)-2-oxopropyl phosphate + H2O. The protein operates within amino-acid biosynthesis; L-histidine biosynthesis; L-histidine from 5-phospho-alpha-D-ribose 1-diphosphate: step 6/9. This Parvibaculum lavamentivorans (strain DS-1 / DSM 13023 / NCIMB 13966) protein is Imidazoleglycerol-phosphate dehydratase.